Reading from the N-terminus, the 548-residue chain is Probable malate:quinone oxidoreductase (548 aa).

The protein belongs to the MQO family. The cofactor is FAD.

The enzyme catalyses (S)-malate + a quinone = a quinol + oxaloacetate. The protein operates within carbohydrate metabolism; tricarboxylic acid cycle; oxaloacetate from (S)-malate (quinone route): step 1/1. The chain is Probable malate:quinone oxidoreductase from Escherichia coli O6:H1 (strain CFT073 / ATCC 700928 / UPEC).